A 213-amino-acid polypeptide reads, in one-letter code: Holliday junction branch migration complex subunit RuvA (213 aa).

Positions 1-69 are domain I; it reads MISYLKGIVA…EEIPLLYGFS (69 aa). Residues 70-148 form a domain II region; the sequence is SPAERDLFRH…EWRKSAGFFV (79 aa). The tract at residues 149–158 is flexible linker; it reads ATEGPAPGIL. The interval 158–213 is domain III; it reads LEEVQMTLFALGYTAHEVSHALHVVSEDIGLPKDAYVEDWIKQAIAHLSSSEQVSH.

The protein belongs to the RuvA family. As to quaternary structure, homotetramer. Forms an RuvA(8)-RuvB(12)-Holliday junction (HJ) complex. HJ DNA is sandwiched between 2 RuvA tetramers; dsDNA enters through RuvA and exits via RuvB. An RuvB hexamer assembles on each DNA strand where it exits the tetramer. Each RuvB hexamer is contacted by two RuvA subunits (via domain III) on 2 adjacent RuvB subunits; this complex drives branch migration. In the full resolvosome a probable DNA-RuvA(4)-RuvB(12)-RuvC(2) complex forms which resolves the HJ.

The protein resides in the cytoplasm. Functionally, the RuvA-RuvB-RuvC complex processes Holliday junction (HJ) DNA during genetic recombination and DNA repair, while the RuvA-RuvB complex plays an important role in the rescue of blocked DNA replication forks via replication fork reversal (RFR). RuvA specifically binds to HJ cruciform DNA, conferring on it an open structure. The RuvB hexamer acts as an ATP-dependent pump, pulling dsDNA into and through the RuvAB complex. HJ branch migration allows RuvC to scan DNA until it finds its consensus sequence, where it cleaves and resolves the cruciform DNA. The sequence is that of Holliday junction branch migration complex subunit RuvA from Nostoc sp. (strain PCC 7120 / SAG 25.82 / UTEX 2576).